The following is a 311-amino-acid chain: MPLRLIFMGTPDFAVPTLLELAGHGHEIVAVYTRAPKPGGRRGLALVPTPIESEARRLGIPVLTPKTLKTEEALAEFRAHEADAAVVVAYGMILPQAILDAPKLGCYNLHASLLPRWRGAAPINRAIMAGDAESGVMVMKMDVGLDTGDVAMAELLAITDAMTASDLHDKLSRIGADLMVRAMAALERGGLTLTKQAEDGVTYAAKIEKAEARIDWTKPAHAVLRHIHGLSPFPGAWSEITIDGEAVRLKILRCALARGTGEPGTVVDDELTIACADSAIRITELQRAGKSPMKAADFLRGTRVAPGLRFG.

112–115 (SLLP) serves as a coordination point for (6S)-5,6,7,8-tetrahydrofolate.

This sequence belongs to the Fmt family.

The catalysed reaction is L-methionyl-tRNA(fMet) + (6R)-10-formyltetrahydrofolate = N-formyl-L-methionyl-tRNA(fMet) + (6S)-5,6,7,8-tetrahydrofolate + H(+). Functionally, attaches a formyl group to the free amino group of methionyl-tRNA(fMet). The formyl group appears to play a dual role in the initiator identity of N-formylmethionyl-tRNA by promoting its recognition by IF2 and preventing the misappropriation of this tRNA by the elongation apparatus. The chain is Methionyl-tRNA formyltransferase from Bradyrhizobium sp. (strain ORS 278).